A 326-amino-acid chain; its full sequence is Vitamin B12 import system permease protein BtuC (326 aa).

The next 9 helical transmembrane spans lie at 15-35 (WLLC…CAGE), 61-81 (LAVL…QALF), 88-108 (PGLL…VLLG), 112-132 (LPNW…TLIL), 146-166 (LLAG…AIYF), 184-204 (GGVD…LLWI), 240-260 (GWMV…GLVI), 274-294 (VLLP…DIVA), and 302-322 (ELPI…WLLL).

It belongs to the binding-protein-dependent transport system permease family. FecCD subfamily. The complex is composed of two ATP-binding proteins (BtuD), two transmembrane proteins (BtuC) and a solute-binding protein (BtuF).

It localises to the cell inner membrane. In terms of biological role, part of the ABC transporter complex BtuCDF involved in vitamin B12 import. Involved in the translocation of the substrate across the membrane. The protein is Vitamin B12 import system permease protein BtuC of Shigella sonnei (strain Ss046).